Here is a 310-residue protein sequence, read N- to C-terminus: RING-H2 finger protein ATL60 (310 aa).

Residues 24–44 (VLLFSIVSIFTGILFLLLLHL) form a helical membrane-spanning segment. Residues 120-162 (CAVCLSDLVDGDKARVLPRCNHGFHVDCIDMWFQSHSTCPLCR) form an RING-type; atypical zinc finger. 2 disordered regions span residues 170-201 (DTTHGGSEGLPQNQNFESGHSTNQHNPSQDQS) and 240-260 (GNFAASYNDHQQESSSTRSQE). The segment covering 179-201 (LPQNQNFESGHSTNQHNPSQDQS) has biased composition (polar residues).

This sequence belongs to the RING-type zinc finger family. ATL subfamily.

It localises to the membrane. It catalyses the reaction S-ubiquitinyl-[E2 ubiquitin-conjugating enzyme]-L-cysteine + [acceptor protein]-L-lysine = [E2 ubiquitin-conjugating enzyme]-L-cysteine + N(6)-ubiquitinyl-[acceptor protein]-L-lysine.. The protein operates within protein modification; protein ubiquitination. This is RING-H2 finger protein ATL60 (ATL60) from Arabidopsis thaliana (Mouse-ear cress).